A 140-amino-acid polypeptide reads, in one-letter code: Lymphocyte antigen 6H (140 aa).

A signal peptide spans 1–25 (MLPAAMKGLGLALLAVLLCSAPAHG). The UPAR/Ly6 domain maps to 26 to 91 (LWCQDCTLTT…RHFFSDYLMG (66 aa)). 5 cysteine pairs are disulfide-bonded: Cys28–Cys52, Cys31–Cys40, Cys45–Cys73, Cys77–Cys104, and Cys105–Cys110. Asn36 carries an N-linked (GlcNAc...) asparagine glycan. Gly115 is lipidated: GPI-anchor amidated glycine. Residues 116-140 (AGHSPWALAGGLLLSLGPALLWAGP) constitute a propeptide, removed in mature form.

As to quaternary structure, interacts with CHRNA4 and CHRNA7. Highly expressed in brain (cerebral cortex, amygdala, hippocampus and subthalamic nucleus) and in acute human leukemic cell line MOLT-3. Also found in lower levels in testis, pancreas, small intestine and colon.

Its subcellular location is the cell membrane. In terms of biological role, believed to act as a modulator of nicotinic acetylcholine receptors (nAChRs) activity. In vitro inhibits alpha-3:beta-4-containing nAChRs maximum response. May play a role in the intracellular trafficking of alpha-7-containing nAChRs and may inhibit their expression at the cell surface. Seems to inhibit alpha-7/CHRNA7 signaling in hippocampal neurons. The sequence is that of Lymphocyte antigen 6H (LY6H) from Homo sapiens (Human).